A 479-amino-acid polypeptide reads, in one-letter code: RHO1 GEF localizing protein 1 (479 aa).

The interval 460–479 (SQKDPSRTDPSKLRRVPVIQ) is disordered.

In terms of biological role, regulator of RHO1 signaling that acts as a cofactor required for the efficient localization of the TUS1 GTP exchange factor (GEF) for RHO1 to the bud neck during all phases of cytokinesis. RHO1 is a key, essential hub protein in the cell wall integrity (CWI) pathway in which activated RHO1-GTP binds directly to and activates multiple different downstream effectors required for cell wall synthesis and actin assembly during cytokinesis. This chain is RHO1 GEF localizing protein 1, found in Saccharomyces cerevisiae (strain ATCC 204508 / S288c) (Baker's yeast).